The chain runs to 339 residues: Probable G-protein coupled receptor 33 (339 aa).

Residues Met1–Ala30 are Extracellular-facing. Asn5 and Asn19 each carry an N-linked (GlcNAc...) asparagine glycan. A helical membrane pass occupies residues Ile31 to Met53. Residues Leu54 to Thr64 lie on the Cytoplasmic side of the membrane. Residues Leu65 to Thr86 form a helical membrane-spanning segment. Topologically, residues Ser87–Val103 are extracellular. Cys101 and Cys179 are joined by a disulfide. A helical transmembrane segment spans residues Phe104–Val124. Topologically, residues Asp125–Arg143 are cytoplasmic. A helical membrane pass occupies residues Trp144 to Val165. Over Phe166–Arg209 the chain is Extracellular. A helical membrane pass occupies residues Phe210 to Thr230. Residues Lys231 to Val246 lie on the Cytoplasmic side of the membrane. Residues Met247–Val268 traverse the membrane as a helical segment. Residues Leu269–Leu283 are Extracellular-facing. Residues Ala284 to Gly303 traverse the membrane as a helical segment. Residues Glu304–Ile339 lie on the Cytoplasmic side of the membrane.

This sequence belongs to the G-protein coupled receptor 1 family.

Its subcellular location is the cell membrane. Functionally, orphan receptor; could be a chemoattractant receptor. This Rattus rattus (Black rat) protein is Probable G-protein coupled receptor 33 (Gpr33).